We begin with the raw amino-acid sequence, 499 residues long: Putative antiporter subunit mnhD2 (499 aa).

The next 14 helical transmembrane spans lie at 3-23, 33-53, 79-99, 109-129, 131-151, 162-182, 210-230, 241-261, 272-292, 309-329, 331-351, 370-390, 404-424, and 452-472; these read LSNLLILPMLLPFLCALILVF, YLYLGTMTITTIISLMLLIYV, LSLIMVTTASFVITLIMAYGF, YHLPSFILFLSVGVIGSFLTS, LFNLYVMFEIMLLASFVLITL, IIYVVLNIIGSWLFLLGIGLL, ISLIFLVAFSAKAALVLFMWL, LAALFAALMTKVGAYALIRFF, IHPLLATMAAITMVIGAIGVI, IGFIILGLGTNTFAGINGAIF, LVNDIVVKTLLFFIIGSLVYI, FGVAFIIMIFAIGGVPPFSGF, GNYIGLALMIITSLIAMYSLF, and ILSILVVVVIAIGIAAPVVLN.

This sequence belongs to the CPA3 antiporters (TC 2.A.63) subunit D family. As to quaternary structure, may form a heterooligomeric complex that consists of seven subunits: mnhA2, mnhB2, mnhC2, mnhD2, mnhE2, mnhF2 and mnhG2.

Its subcellular location is the cell membrane. Its function is as follows. Expression of the mnh2 operon in E.coli is not able to catalyze Na(+)Li(+)/H(+) antiport. It does however confer higher growth rates than the control strain at up to pH 9.5. The operon may encode an NADH-ubiquinone oxidoreductase. This Staphylococcus aureus protein is Putative antiporter subunit mnhD2 (mnhD2).